Consider the following 403-residue polypeptide: Nodal homolog (403 aa).

The N-terminal stretch at 1–18 (MAFLTAVLCFGFACMVQG) is a signal peptide. Residues 19-278 (VPSWLESRIP…RMPGIRRHRR (260 aa)) constitute a propeptide that is removed on maturation. 3 N-linked (GlcNAc...) asparagine glycosylation sites follow: Asn68, Asn133, and Asn169. The tract at residues 195–220 (AERGSGMSSAEFLDSPGDSPQYNPHH) is disordered. 3 cysteine pairs are disulfide-bonded: Cys303–Cys369, Cys332–Cys400, and Cys336–Cys402. Asn341 carries N-linked (GlcNAc...) asparagine glycosylation.

It belongs to the TGF-beta family. In terms of assembly, homodimer; disulfide-linked. Interacts with, and is inhibited by cer1 and gdf10/bmp3b.

Its subcellular location is the secreted. In terms of biological role, cooperation and regulatory loops of multiple nodals are essential for mesendoderm patterning in early embryos. Essential for mesoderm formation and axial patterning during embryonic development. Activates the activin-like signaling pathway to induce dorsal and ventral mesoderm in animal cap ectoderm. In addition, also dorsalizes ventral marginal zone (VMZ) tissues during gastrulation. Acts in a downstream signaling cascade via cripto and cer1 to mediate cardiogenesis in embryonic mesoderm. Directs the orientation of the left-right axis by driving the left-specific gene cascade in the left lateral plate mesoderm. In Xenopus tropicalis (Western clawed frog), this protein is Nodal homolog.